Consider the following 356-residue polypeptide: DNA polymerase IV (356 aa).

The UmuC domain maps to 1-188; sequence MDTSRKIIHI…IPVTKFYGVG (188 aa). Mg(2+) is bound by residues Asp11 and Asp106. Residue Glu107 is part of the active site.

The protein belongs to the DNA polymerase type-Y family. As to quaternary structure, monomer. It depends on Mg(2+) as a cofactor.

Its subcellular location is the cytoplasm. It catalyses the reaction DNA(n) + a 2'-deoxyribonucleoside 5'-triphosphate = DNA(n+1) + diphosphate. Poorly processive, error-prone DNA polymerase involved in untargeted mutagenesis. Copies undamaged DNA at stalled replication forks, which arise in vivo from mismatched or misaligned primer ends. These misaligned primers can be extended by PolIV. Exhibits no 3'-5' exonuclease (proofreading) activity. May be involved in translesional synthesis, in conjunction with the beta clamp from PolIII. The protein is DNA polymerase IV of Listeria innocua serovar 6a (strain ATCC BAA-680 / CLIP 11262).